A 173-amino-acid chain; its full sequence is Ribosome maturation factor RimM (173 aa).

The 80-residue stretch at 94–173 folds into the PRC barrel domain; that stretch reads EGEFYWRDLI…TIEVDWDPGF (80 aa).

This sequence belongs to the RimM family. As to quaternary structure, binds ribosomal protein uS19.

The protein localises to the cytoplasm. Functionally, an accessory protein needed during the final step in the assembly of 30S ribosomal subunit, possibly for assembly of the head region. Essential for efficient processing of 16S rRNA. May be needed both before and after RbfA during the maturation of 16S rRNA. It has affinity for free ribosomal 30S subunits but not for 70S ribosomes. The chain is Ribosome maturation factor RimM from Aeromonas salmonicida (strain A449).